The chain runs to 199 residues: Achaete-scute homolog 1 (199 aa).

The interval 37–56 (PAEEQQASKAKPIKRQRSAS) is disordered. A bHLH domain is found at 81–133 (AAVARRNERERNRVKLVNLGFATLREHVPNGAANKKMSKVETLRSAVEYIRAL). A compositionally biased stretch (polar residues) spans 162-179 (HDMNSMAGSPVSSYSSDE). A disordered region spans residues 162–189 (HDMNSMAGSPVSSYSSDEGSYDPLSPEE).

As to quaternary structure, efficient DNA binding requires dimerization with another bHLH protein. As to expression, neuronal precursor cells.

The protein localises to the nucleus. In terms of biological role, transcription factor that plays a key role in neuronal differentiation: acts as a pioneer transcription factor, accessing closed chromatin to allow other factors to bind and activate neural pathways. Directly binds the E box motif (5'-CANNTG-3') on promoters and promotes transcription of neuronal genes. The combination of three transcription factors, ASCL1, POU3F2/BRN2 and MYT1L, is sufficient to reprogram fibroblasts and other somatic cells into induced neuronal (iN) cells in vitro. This chain is Achaete-scute homolog 1 (ascl1), found in Xenopus laevis (African clawed frog).